The following is a 554-amino-acid chain: Probable pectinesterase/pectinesterase inhibitor 6 (554 aa).

An N-terminal signal peptide occupies residues 1–32; sequence MDHKILLTPPKSLYTKCIITIIYVVSISHLNA. The interval 29–183 is pectinesterase inhibitor 6; that stretch reads HLNAHFITSC…TKSISNSLAV (155 aa). N-linked (GlcNAc...) asparagine glycans are attached at residues N119 and N172. The segment at 250–540 is pectinesterase 6; that stretch reads DLVVAKDGSG…FTVENFLDGN (291 aa). The substrate site is built by T327 and Q357. D380 (proton donor; for pectinesterase activity) is an active-site residue. Residues C394 and C414 are joined by a disulfide bond. Catalysis depends on D401, which acts as the Nucleophile; for pectinesterase activity. Substrate is bound by residues R460 and W462.

In the N-terminal section; belongs to the PMEI family. It in the C-terminal section; belongs to the pectinesterase family. As to expression, expressed in rosette leaves, flower and siliques.

The protein resides in the secreted. The protein localises to the cell wall. The enzyme catalyses [(1-&gt;4)-alpha-D-galacturonosyl methyl ester](n) + n H2O = [(1-&gt;4)-alpha-D-galacturonosyl](n) + n methanol + n H(+). It functions in the pathway glycan metabolism; pectin degradation; 2-dehydro-3-deoxy-D-gluconate from pectin: step 1/5. Functionally, acts in the modification of cell walls via demethylesterification of cell wall pectin. The protein is Probable pectinesterase/pectinesterase inhibitor 6 (PME6) of Arabidopsis thaliana (Mouse-ear cress).